The sequence spans 144 residues: Nucleoside diphosphate kinase (144 aa).

Residues Lys11, Phe59, Arg87, Thr93, Arg104, and Asn114 each contribute to the ATP site. The active-site Pros-phosphohistidine intermediate is the His117.

It belongs to the NDK family. Homotetramer. Requires Mg(2+) as cofactor.

The protein resides in the cytoplasm. The enzyme catalyses a 2'-deoxyribonucleoside 5'-diphosphate + ATP = a 2'-deoxyribonucleoside 5'-triphosphate + ADP. The catalysed reaction is a ribonucleoside 5'-diphosphate + ATP = a ribonucleoside 5'-triphosphate + ADP. Its function is as follows. Major role in the synthesis of nucleoside triphosphates other than ATP. The ATP gamma phosphate is transferred to the NDP beta phosphate via a ping-pong mechanism, using a phosphorylated active-site intermediate. The polypeptide is Nucleoside diphosphate kinase (Aliivibrio salmonicida (strain LFI1238) (Vibrio salmonicida (strain LFI1238))).